The following is a 62-amino-acid chain: KEGYAMDHEGCKFSCFIRPSGFCDGYCKTHLKASSGYCAWPACYCYGVPSNIKVWDYATNKC.

Residues 1–62 (KEGYAMDHEG…KVWDYATNKC (62 aa)) enclose the LCN-type CS-alpha/beta domain. Intrachain disulfides connect Cys-11–Cys-62, Cys-15–Cys-38, Cys-23–Cys-43, and Cys-27–Cys-45.

Belongs to the long (4 C-C) scorpion toxin superfamily. Sodium channel inhibitor family. Beta subfamily. Expressed by the venom gland.

Its subcellular location is the secreted. Beta toxins bind voltage-independently at site-4 of sodium channels (Nav) and shift the voltage of activation toward more negative potentials thereby affecting sodium channel activation and promoting spontaneous and repetitive firing. This toxin is active against both mammals and insects. The sequence is that of Toxin Tb2-II from Tityus bahiensis (Brazilian scorpion).